A 352-amino-acid chain; its full sequence is UDP-N-acetylglucosamine--N-acetylmuramyl-(pentapeptide) pyrophosphoryl-undecaprenol N-acetylglucosamine transferase (352 aa).

UDP-N-acetyl-alpha-D-glucosamine-binding residues include Ser-195 and Gln-287.

This sequence belongs to the glycosyltransferase 28 family. MurG subfamily.

It localises to the cell membrane. It carries out the reaction Mur2Ac(oyl-L-Ala-gamma-D-Glu-L-Lys-D-Ala-D-Ala)-di-trans,octa-cis-undecaprenyl diphosphate + UDP-N-acetyl-alpha-D-glucosamine = beta-D-GlcNAc-(1-&gt;4)-Mur2Ac(oyl-L-Ala-gamma-D-Glu-L-Lys-D-Ala-D-Ala)-di-trans,octa-cis-undecaprenyl diphosphate + UDP + H(+). It functions in the pathway cell wall biogenesis; peptidoglycan biosynthesis. Functionally, cell wall formation. Catalyzes the transfer of a GlcNAc subunit on undecaprenyl-pyrophosphoryl-MurNAc-pentapeptide (lipid intermediate I) to form undecaprenyl-pyrophosphoryl-MurNAc-(pentapeptide)GlcNAc (lipid intermediate II). The chain is UDP-N-acetylglucosamine--N-acetylmuramyl-(pentapeptide) pyrophosphoryl-undecaprenol N-acetylglucosamine transferase from Streptococcus pneumoniae (strain 70585).